A 210-amino-acid chain; its full sequence is Protein-L-isoaspartate O-methyltransferase (210 aa).

Ser54 is a catalytic residue.

It belongs to the methyltransferase superfamily. L-isoaspartyl/D-aspartyl protein methyltransferase family.

It is found in the cytoplasm. It carries out the reaction [protein]-L-isoaspartate + S-adenosyl-L-methionine = [protein]-L-isoaspartate alpha-methyl ester + S-adenosyl-L-homocysteine. Functionally, catalyzes the methyl esterification of L-isoaspartyl residues in peptides and proteins that result from spontaneous decomposition of normal L-aspartyl and L-asparaginyl residues. It plays a role in the repair and/or degradation of damaged proteins. This chain is Protein-L-isoaspartate O-methyltransferase, found in Methanothrix thermoacetophila (strain DSM 6194 / JCM 14653 / NBRC 101360 / PT) (Methanosaeta thermophila).